A 125-amino-acid chain; its full sequence is UPF0251 protein Dhaf_1981 (125 aa).

This sequence belongs to the UPF0251 family.

The sequence is that of UPF0251 protein Dhaf_1981 from Desulfitobacterium hafniense (strain DSM 10664 / DCB-2).